The sequence spans 222 residues: N-(5'-phosphoribosyl)anthranilate isomerase (222 aa).

It belongs to the TrpF family.

The catalysed reaction is N-(5-phospho-beta-D-ribosyl)anthranilate = 1-(2-carboxyphenylamino)-1-deoxy-D-ribulose 5-phosphate. Its pathway is amino-acid biosynthesis; L-tryptophan biosynthesis; L-tryptophan from chorismate: step 3/5. This is N-(5'-phosphoribosyl)anthranilate isomerase from Rhizobium rhizogenes (strain K84 / ATCC BAA-868) (Agrobacterium radiobacter).